Here is a 261-residue protein sequence, read N- to C-terminus: Carnitinyl-CoA dehydratase (261 aa).

Glu-111 functions as the Nucleophile in the catalytic mechanism. Glu-131 serves as the catalytic Proton acceptor.

This sequence belongs to the enoyl-CoA hydratase/isomerase family.

The catalysed reaction is (R)-carnitinyl-CoA = crotonobetainyl-CoA + H2O. Its pathway is amine and polyamine metabolism; carnitine metabolism. Its function is as follows. Catalyzes the reversible dehydration of L-carnitinyl-CoA to crotonobetainyl-CoA. The polypeptide is Carnitinyl-CoA dehydratase (Proteus mirabilis (strain HI4320)).